A 778-amino-acid polypeptide reads, in one-letter code: Lon protease (778 aa).

Positions 6–207 (LPLMALRDMV…TVISTLTSNI (202 aa)) constitute a Lon N-terminal domain. Position 356–363 (356–363 (GPPGVGKT)) interacts with ATP. Positions 592–773 (EDQIGSTTGL…DQVLKHALVE (182 aa)) constitute a Lon proteolytic domain. Catalysis depends on residues S679 and K722.

It belongs to the peptidase S16 family. Homohexamer. Organized in a ring with a central cavity.

Its subcellular location is the cytoplasm. It catalyses the reaction Hydrolysis of proteins in presence of ATP.. ATP-dependent serine protease that mediates the selective degradation of mutant and abnormal proteins as well as certain short-lived regulatory proteins. Required for cellular homeostasis and for survival from DNA damage and developmental changes induced by stress. Degrades polypeptides processively to yield small peptide fragments that are 5 to 10 amino acids long. Binds to DNA in a double-stranded, site-specific manner. This chain is Lon protease, found in Rickettsia felis (strain ATCC VR-1525 / URRWXCal2) (Rickettsia azadi).